The primary structure comprises 388 residues: Succinate--CoA ligase [ADP-forming] subunit beta (388 aa).

The ATP-grasp domain maps to 9 to 244 (KQLFARYGLP…QSQEDPREAQ (236 aa)). Residues Lys46, 53–55 (GRG), Glu99, Thr102, and Glu107 each bind ATP. Asn199 and Asp213 together coordinate Mg(2+). Residues Asn264 and 321-323 (GIV) contribute to the substrate site.

This sequence belongs to the succinate/malate CoA ligase beta subunit family. As to quaternary structure, heterotetramer of two alpha and two beta subunits. Requires Mg(2+) as cofactor.

It carries out the reaction succinate + ATP + CoA = succinyl-CoA + ADP + phosphate. The enzyme catalyses GTP + succinate + CoA = succinyl-CoA + GDP + phosphate. It participates in carbohydrate metabolism; tricarboxylic acid cycle; succinate from succinyl-CoA (ligase route): step 1/1. Its function is as follows. Succinyl-CoA synthetase functions in the citric acid cycle (TCA), coupling the hydrolysis of succinyl-CoA to the synthesis of either ATP or GTP and thus represents the only step of substrate-level phosphorylation in the TCA. The beta subunit provides nucleotide specificity of the enzyme and binds the substrate succinate, while the binding sites for coenzyme A and phosphate are found in the alpha subunit. In Shigella dysenteriae serotype 1 (strain Sd197), this protein is Succinate--CoA ligase [ADP-forming] subunit beta.